The chain runs to 387 residues: Protein RecA (387 aa).

Residue 78–85 participates in ATP binding; it reads GPESSGKT. The span at 350–369 shows a compositional bias: basic and acidic residues; sequence QTREVKSIERDPKETKETKS. Positions 350-387 are disordered; sequence QTREVKSIERDPKETKETKSKQPVSFSTEAEVDIAVGE.

It belongs to the RecA family.

The protein resides in the cytoplasm. Functionally, can catalyze the hydrolysis of ATP in the presence of single-stranded DNA, the ATP-dependent uptake of single-stranded DNA by duplex DNA, and the ATP-dependent hybridization of homologous single-stranded DNAs. It interacts with LexA causing its activation and leading to its autocatalytic cleavage. This chain is Protein RecA, found in Leptospira meyeri.